Here is a 128-residue protein sequence, read N- to C-terminus: Fumarate reductase subunit C (128 aa).

3 helical membrane-spanning segments follow: residues 31-51, 67-87, and 106-126; these read ATCI…ISLG, VVIL…TLYV, and ILKN…LVLV.

Belongs to the FrdC family. As to quaternary structure, part of an enzyme complex containing four subunits: a flavoprotein (FrdA), an iron-sulfur protein (FrdB), and two hydrophobic anchor proteins (FrdC and FrdD).

It localises to the cell inner membrane. Anchors the catalytic components of the fumarate reductase complex to the cell membrane, binds quinones. This is Fumarate reductase subunit C from Haemophilus ducreyi (strain 35000HP / ATCC 700724).